A 500-amino-acid polypeptide reads, in one-letter code: NAD(P)H-quinone oxidoreductase chain 4, chloroplastic (500 aa).

The next 14 membrane-spanning stretches (helical) occupy residues 4-24 (FPWL…IFFL), 37-57 (ICIC…HFQL), 87-107 (IGPI…AWPV), 113-130 (LFHF…GLFS), 134-154 (LLLF…LLSM), 167-187 (FILY…GMGL), 211-231 (ILFY…IPLH), 242-262 (HYST…YGLV), 272-292 (AHSI…IYAA), 305-325 (IAYS…SITD), 330-350 (GAIL…FLAG), 386-406 (LALP…GIIT), 416-436 (ILIT…LLSM), and 462-482 (LFVS…PDFV).

It belongs to the complex I subunit 4 family.

The protein resides in the plastid. Its subcellular location is the chloroplast thylakoid membrane. The enzyme catalyses a plastoquinone + NADH + (n+1) H(+)(in) = a plastoquinol + NAD(+) + n H(+)(out). It carries out the reaction a plastoquinone + NADPH + (n+1) H(+)(in) = a plastoquinol + NADP(+) + n H(+)(out). The chain is NAD(P)H-quinone oxidoreductase chain 4, chloroplastic from Acorus calamus var. americanus (American sweet flag).